The chain runs to 573 residues: Putative ABC transporter ATP-binding protein LJ_1704 (573 aa).

ABC transporter domains are found at residues 6-247 (IEFK…GVRE) and 303-536 (LKLD…ASLK). ATP contacts are provided by residues 40–47 (GPSGSGKS) and 337–344 (GQNGAGKT).

The protein belongs to the ABC transporter superfamily.

The protein resides in the cell membrane. In terms of biological role, probably part of an ABC transporter complex. Responsible for energy coupling to the transport system. This is Putative ABC transporter ATP-binding protein LJ_1704 from Lactobacillus johnsonii (strain CNCM I-12250 / La1 / NCC 533).